The following is a 4466-amino-acid chain: Dynein beta chain, ciliary (4466 aa).

The stem stretch occupies residues 1–1813; it reads MGDVVDARLD…YANICDAQFK (1813 aa). Residue 154-161 coordinates ATP; the sequence is AGQVKGKT. Coiled coils occupy residues 482 to 502, 627 to 643, 734 to 805, 1036 to 1056, 1306 to 1337, and 1443 to 1468; these read QEFL…DRRL, QKYE…EQKV, VLEV…WTKQ, TLDQ…EADE, WLEI…AWDA, and LLKS…MTSK. AAA regions lie at residues 1814–2035, 2095–2316, 2422–2669, and 2767–3016; these read YSYE…VLVV, KVVK…IRFK, ELDP…VFQG, and TYNE…ERRY. ATP-binding positions include 1852–1859, 2133–2140, 2460–2467, and 2805–2812; these read GPAGTGKT, GNAGTGKS, GNAGLGKS, and GVGGSGKQ. 3 coiled-coil regions span residues 3033 to 3134, 3263 to 3325, and 3573 to 3642; these read SLLA…AKAE, EPKR…SRTI, and QERP…EEAK. The tract at residues 3033-3325 is stalk; that stretch reads SLLAMKSKEL…QEAEATSRTI (293 aa). 2 AAA regions span residues 3409–3636 and 3846–4072; these read LTDD…EISV and VRNF…VLYN.

It belongs to the dynein heavy chain family. As to quaternary structure, consists of at least two heavy chains (alpha and beta), three intermediate chains and several light chains.

It is found in the cell projection. The protein localises to the cilium. It localises to the flagellum. The protein resides in the cytoplasm. Its subcellular location is the cytoskeleton. It is found in the flagellum axoneme. Its function is as follows. Force generating protein of eukaryotic cilia and flagella. Produces force towards the minus ends of microtubules. Dynein has ATPase activity; the force-producing power stroke is thought to occur on release of ADP. The polypeptide is Dynein beta chain, ciliary (Heliocidaris crassispina (Sea urchin)).